Consider the following 826-residue polypeptide: U-box domain-containing protein 4 (826 aa).

Positions Arg-172–Asp-204 form a coiled coil. Residues Ala-229–Lys-303 enclose the U-box domain. The interval Gly-330–Pro-501 is disordered. Positions Ala-347–Arg-360 are enriched in polar residues. Basic and acidic residues predominate over residues Asp-391–Ala-414. A Phosphoserine modification is found at Ser-396. Low complexity predominate over residues Gly-416–Val-428. Residues Thr-492–Pro-501 show a composition bias toward basic and acidic residues. 7 ARM repeats span residues Asn-530–Lys-570, Met-573–Ile-612, Asp-614–Val-653, Glu-655–Ile-694, Gln-696–Thr-734, Pro-736–Thr-775, and Gly-778–Asn-817.

The enzyme catalyses S-ubiquitinyl-[E2 ubiquitin-conjugating enzyme]-L-cysteine + [acceptor protein]-L-lysine = [E2 ubiquitin-conjugating enzyme]-L-cysteine + N(6)-ubiquitinyl-[acceptor protein]-L-lysine.. The protein operates within protein modification; protein ubiquitination. In terms of biological role, functions as an E3 ubiquitin ligase. This chain is U-box domain-containing protein 4 (PUB4), found in Arabidopsis thaliana (Mouse-ear cress).